The primary structure comprises 767 residues: 5-methyltetrahydropteroyltriglutamate--homocysteine methyltransferase (767 aa).

Residues 16–19 (RELK) and Lys-122 contribute to the 5-methyltetrahydropteroyltri-L-glutamate site. L-homocysteine is bound by residues 443–445 (IGS) and Glu-496. L-methionine is bound by residues 443–445 (IGS) and Glu-496. 5-methyltetrahydropteroyltri-L-glutamate is bound by residues 527–528 (RC) and Trp-573. Residue Asp-611 coordinates L-homocysteine. Residue Asp-611 participates in L-methionine binding. Glu-617 contributes to the 5-methyltetrahydropteroyltri-L-glutamate binding site. Positions 653, 655, and 677 each coordinate Zn(2+). The active-site Proton donor is His-706. Cys-738 serves as a coordination point for Zn(2+).

It belongs to the vitamin-B12 independent methionine synthase family. Zn(2+) is required as a cofactor.

It carries out the reaction 5-methyltetrahydropteroyltri-L-glutamate + L-homocysteine = tetrahydropteroyltri-L-glutamate + L-methionine. Its pathway is amino-acid biosynthesis; L-methionine biosynthesis via de novo pathway; L-methionine from L-homocysteine (MetE route): step 1/1. Functionally, catalyzes the transfer of a methyl group from 5-methyltetrahydrofolate to homocysteine resulting in methionine formation. The chain is 5-methyltetrahydropteroyltriglutamate--homocysteine methyltransferase from Ectopseudomonas mendocina (strain ymp) (Pseudomonas mendocina).